The primary structure comprises 195 residues: Orotate phosphoribosyltransferase (195 aa).

Residues Arg87, Lys91, and 112–120 (DDVATTGGS) each bind 5-phospho-alpha-D-ribose 1-diphosphate. Orotate contacts are provided by Thr116 and Arg144.

The protein belongs to the purine/pyrimidine phosphoribosyltransferase family. PyrE subfamily. As to quaternary structure, homodimer. The cofactor is Mg(2+).

It catalyses the reaction orotidine 5'-phosphate + diphosphate = orotate + 5-phospho-alpha-D-ribose 1-diphosphate. It functions in the pathway pyrimidine metabolism; UMP biosynthesis via de novo pathway; UMP from orotate: step 1/2. In terms of biological role, catalyzes the transfer of a ribosyl phosphate group from 5-phosphoribose 1-diphosphate to orotate, leading to the formation of orotidine monophosphate (OMP). The polypeptide is Orotate phosphoribosyltransferase (Sulfurisphaera tokodaii (strain DSM 16993 / JCM 10545 / NBRC 100140 / 7) (Sulfolobus tokodaii)).